We begin with the raw amino-acid sequence, 92 residues long: Sec-independent protein translocase protein TatA (92 aa).

Residues 1 to 21 (MGIFDWKHWIVILVVVVLVFG) form a helical membrane-spanning segment. Residues 44–92 (NDDEKPADPVVNPVPPAQPVHPQATQPITERRTFDVQAEKVEEPTRKDS) form a disordered region. A compositionally biased stretch (basic and acidic residues) spans 72–92 (TERRTFDVQAEKVEEPTRKDS).

This sequence belongs to the TatA/E family. The Tat system comprises two distinct complexes: a TatABC complex, containing multiple copies of TatA, TatB and TatC subunits, and a separate TatA complex, containing only TatA subunits. Substrates initially bind to the TatABC complex, which probably triggers association of the separate TatA complex to form the active translocon.

It localises to the cell inner membrane. Functionally, part of the twin-arginine translocation (Tat) system that transports large folded proteins containing a characteristic twin-arginine motif in their signal peptide across membranes. TatA could form the protein-conducting channel of the Tat system. The polypeptide is Sec-independent protein translocase protein TatA (Pseudomonas fluorescens (strain SBW25)).